A 369-amino-acid polypeptide reads, in one-letter code: Protein DUF642 L-GALACTONO-1,4-LACTONE-RESPONSIVE GENE 2 (369 aa).

The first 19 residues, 1 to 19, serve as a signal peptide directing secretion; sequence MEGVTVVSFFLLFIATAMA. A glycan (N-linked (GlcNAc...) asparagine) is linked at asparagine 125.

Expressed in roots, seedlings and leaves.

It is found in the secreted. The protein localises to the cell wall. Involved in the regulation of testa rupture during seed germination. Required during roots and rosettes development. The chain is Protein DUF642 L-GALACTONO-1,4-LACTONE-RESPONSIVE GENE 2 from Arabidopsis thaliana (Mouse-ear cress).